The following is a 139-amino-acid chain: Peptide methionine sulfoxide reductase MsrB (139 aa).

In terms of domain architecture, MsrB spans 9–131 (TPSDNTEMTE…NSASLSFIDD (123 aa)). The Zn(2+) site is built by cysteine 48, cysteine 51, cysteine 97, and cysteine 100. Cysteine 120 (nucleophile) is an active-site residue.

Belongs to the MsrB Met sulfoxide reductase family. Zn(2+) is required as a cofactor.

It catalyses the reaction L-methionyl-[protein] + [thioredoxin]-disulfide + H2O = L-methionyl-(R)-S-oxide-[protein] + [thioredoxin]-dithiol. This chain is Peptide methionine sulfoxide reductase MsrB, found in Pectobacterium atrosepticum (strain SCRI 1043 / ATCC BAA-672) (Erwinia carotovora subsp. atroseptica).